Consider the following 138-residue polypeptide: Large ribosomal subunit protein eL14B (138 aa).

An N-acetylserine modification is found at Ser2.

This sequence belongs to the eukaryotic ribosomal protein eL14 family. In terms of assembly, component of the large ribosomal subunit (LSU). Mature yeast ribosomes consist of a small (40S) and a large (60S) subunit. The 40S small subunit contains 1 molecule of ribosomal RNA (18S rRNA) and 33 different proteins (encoded by 57 genes). The large 60S subunit contains 3 rRNA molecules (25S, 5.8S and 5S rRNA) and 46 different proteins (encoded by 81 genes). Post-translationally, N-terminally acetylated by acetyltransferase NatA.

The protein localises to the cytoplasm. In terms of biological role, component of the ribosome, a large ribonucleoprotein complex responsible for the synthesis of proteins in the cell. The small ribosomal subunit (SSU) binds messenger RNAs (mRNAs) and translates the encoded message by selecting cognate aminoacyl-transfer RNA (tRNA) molecules. The large subunit (LSU) contains the ribosomal catalytic site termed the peptidyl transferase center (PTC), which catalyzes the formation of peptide bonds, thereby polymerizing the amino acids delivered by tRNAs into a polypeptide chain. The nascent polypeptides leave the ribosome through a tunnel in the LSU and interact with protein factors that function in enzymatic processing, targeting, and the membrane insertion of nascent chains at the exit of the ribosomal tunnel. This Saccharomyces cerevisiae (strain ATCC 204508 / S288c) (Baker's yeast) protein is Large ribosomal subunit protein eL14B.